The primary structure comprises 494 residues: Probable malate:quinone oxidoreductase 3 (494 aa).

Belongs to the MQO family. FAD serves as cofactor.

It catalyses the reaction (S)-malate + a quinone = a quinol + oxaloacetate. The protein operates within carbohydrate metabolism; tricarboxylic acid cycle; oxaloacetate from (S)-malate (quinone route): step 1/1. The protein is Probable malate:quinone oxidoreductase 3 of Staphylococcus epidermidis (strain ATCC 12228 / FDA PCI 1200).